The chain runs to 132 residues: UPF0102 protein Achl_2213 (132 aa).

This sequence belongs to the UPF0102 family.

This chain is UPF0102 protein Achl_2213, found in Pseudarthrobacter chlorophenolicus (strain ATCC 700700 / DSM 12829 / CIP 107037 / JCM 12360 / KCTC 9906 / NCIMB 13794 / A6) (Arthrobacter chlorophenolicus).